The sequence spans 1505 residues: Phosphatidylinositol 3-kinase C2 domain-containing subunit gamma (1505 aa).

Residues 1 to 32 are disordered; it reads MAYNWQTEPNRAEPQEGGHDHQQCHHADQHLS. A compositionally biased stretch (basic and acidic residues) spans 10–31; sequence NRAEPQEGGHDHQQCHHADQHL. A PI3K-RBD domain is found at 278–370; that stretch reads PSRLFADTQF…IQLHLQRSRD (93 aa). Residues 540-688 enclose the C2 PI3K-type domain; sequence LHSHLSFTVC…TPLTLQIDFP (149 aa). The region spanning 703-879 is the PIK helical domain; the sequence is RTDHQEPPRE…QELLAALQFC (177 aa). Residues 948-1226 enclose the PI3K/PI4K catalytic domain; the sequence is DRDACSYFTS…KIKQSLECFP (279 aa). Residues 954–960 are G-loop; it reads YFTSNAL. The interval 1090-1098 is catalytic loop; the sequence is GVCDRHNDN. Positions 1109-1135 are activation loop; the sequence is HIDFGKFLGHAQTFGGIKRDRAPFIFT. One can recognise a PX domain in the interval 1259–1371; the sequence is LNKTRTIQRV…SFFLSEHIQQ (113 aa). One can recognise a C2 domain in the interval 1384 to 1505; the sequence is HSPDKSPQVQ…KWYPLGNSII (122 aa).

It belongs to the PI3/PI4-kinase family. Predominantly expressed in normal liver. High levels also found in regenerating liver. Very low levels found in heart and testis.

It localises to the membrane. The catalysed reaction is a 1,2-diacyl-sn-glycero-3-phospho-(1D-myo-inositol) + ATP = a 1,2-diacyl-sn-glycero-3-phospho-(1D-myo-inositol-3-phosphate) + ADP + H(+). The enzyme catalyses a 1,2-diacyl-sn-glycero-3-phospho-(1D-myo-inositol 4-phosphate) + ATP = a 1,2-diacyl-sn-glycero-3-phospho-(1D-myo-inositol-3,4-bisphosphate) + ADP + H(+). Its function is as follows. Generates phosphatidylinositol 3-phosphate (PtdIns3P) and phosphatidylinositol 3,4-bisphosphate (PtdIns(3,4)P2) that act as second messengers. May play a role in SDF1A-stimulated chemotaxis. This chain is Phosphatidylinositol 3-kinase C2 domain-containing subunit gamma (Pik3c2g), found in Rattus norvegicus (Rat).